Here is a 178-residue protein sequence, read N- to C-terminus: uncharacterized protein (178 aa).

A run of 5 helical transmembrane segments spans residues 1 to 21 (MISI…YGGG), 47 to 67 (MLAL…AYVG), 75 to 95 (GFLI…IVLL), 117 to 137 (VIAV…IKAI), and 158 to 178 (MHPA…IPYL).

The protein belongs to the chromate ion transporter (CHR) (TC 2.A.51) family.

Its subcellular location is the cell membrane. This is an uncharacterized protein from Bacillus subtilis (strain 168).